The sequence spans 224 residues: Jacalin-related lectin 24 (224 aa).

Residues Met8–Pro160 enclose the Jacalin-type lectin domain.

It belongs to the jacalin lectin family.

This is Jacalin-related lectin 24 (JAL24) from Arabidopsis thaliana (Mouse-ear cress).